The following is a 678-amino-acid chain: Vacuolar protein sorting-associated protein 1 (678 aa).

In terms of domain architecture, Dynamin-type G spans 24–311 (LIDLPQITVV…LMHHIRNTLP (288 aa)). Residues 34 to 41 (RSQSSGKS) form a G1 motif region. 34-41 (RSQSSGKS) contributes to the GTP binding site. The G2 motif stretch occupies residues 60–62 (VTR). A disordered region spans residues 71–96 (NRPSASGKNEETTTDSDGKDQNNSSE). Residues 78–90 (KNEETTTDSDGKD) are compositionally biased toward basic and acidic residues. The G3 motif stretch occupies residues 153–156 (DLPG). Residues 153 to 157 (DLPGL) and 222 to 225 (TKVD) each bind GTP. Residues 222 to 225 (TKVD) form a G4 motif region. Residues 252 to 255 (INRG) are G5 motif. Residues 592 to 678 (TEVIKLLIMS…LQASEIVSNV (87 aa)) form the GED domain.

This sequence belongs to the TRAFAC class dynamin-like GTPase superfamily. Dynamin/Fzo/YdjA family.

The chain is Vacuolar protein sorting-associated protein 1 (vps1) from Schizosaccharomyces pombe (strain 972 / ATCC 24843) (Fission yeast).